The sequence spans 370 residues: Glucan endo-1,3-beta-glucosidase (370 aa).

An N-terminal signal peptide occupies residues 1-32 (MASFFARTRRFSLVSLFLLELFTINLIPTTDA). Residue Q33 is modified to Pyrrolidone carboxylic acid. Catalysis depends on E127, which acts as the Proton donor. The active-site Nucleophile is the E272. Residues 348-370 (GERRDGEIVEGDFNGTVSLKSDM) constitute a propeptide, removed in mature form. N361 is a glycosylation site (N-linked (GlcNAc...) asparagine).

Belongs to the glycosyl hydrolase 17 family. As to expression, constitutively expressed in seedling roots.

It catalyses the reaction Hydrolysis of (1-&gt;3)-beta-D-glucosidic linkages in (1-&gt;3)-beta-D-glucans.. Implicated in the defense of plants against pathogens. The protein is Glucan endo-1,3-beta-glucosidase of Pisum sativum (Garden pea).